Consider the following 445-residue polypeptide: Ubiquitin carboxyl-terminal hydrolase 11 (445 aa).

The 412-residue stretch at 1–412 (NSARADLCVA…AAYVLFYQRQ (412 aa)) folds into the USP domain. Residues 127-194 (RPSSDDEDDG…GPSHWPQRAR (68 aa)) form a disordered region. The residue at position 130 (serine 130) is a Phosphoserine. Acidic residues predominate over residues 131–140 (DDEDDGDEKD). The active-site Nucleophile is the histidine 362. Histidine 370 (proton acceptor) is an active-site residue. Positions 416-445 (RRLQPQPSSSDPPASPACGSPPNSEFMDVN) are disordered. Residues 420–439 (PQPSSSDPPASPACGSPPNS) are compositionally biased toward low complexity. The residue at position 430 (serine 430) is a Phosphoserine.

It belongs to the peptidase C19 family. As to quaternary structure, monomer. Interacts with RANBP9/RANBPM. Interacts with BRCA2. Interacts with CHUK/IKKA. Interacts with NFKBIA. Associated component of the Polycomb group (PcG) multiprotein PRC1-like complex.

The protein localises to the nucleus. The protein resides in the cytoplasm. It is found in the chromosome. The enzyme catalyses Thiol-dependent hydrolysis of ester, thioester, amide, peptide and isopeptide bonds formed by the C-terminal Gly of ubiquitin (a 76-residue protein attached to proteins as an intracellular targeting signal).. Its function is as follows. Protease that can remove conjugated ubiquitin from target proteins and polyubiquitin chains. Inhibits the degradation of target proteins by the proteasome. Cleaves preferentially 'Lys-6' and 'Lys-63'-linked ubiquitin chains. Has lower activity with 'Lys-11' and 'Lys-33'-linked ubiquitin chains, and extremely low activity with 'Lys-27', 'Lys-29' and 'Lys-48'-linked ubiquitin chains (in vitro). Plays a role in the regulation of pathways leading to NF-kappa-B activation. Plays a role in the regulation of DNA repair after double-stranded DNA breaks. Acts as a chromatin regulator via its association with the Polycomb group (PcG) multiprotein PRC1-like complex; may act by deubiquitinating components of the PRC1-like complex. Promotes cell proliferation by deubiquitinating phosphorylated E2F1. The polypeptide is Ubiquitin carboxyl-terminal hydrolase 11 (USP11) (Canis lupus familiaris (Dog)).